The primary structure comprises 457 residues: MSAGKIVQIIGAVIDVEFPQDAVPKVYDALKVESGLTLEVQQQLGGGVVRCIALGTSDGLKRGLKVENTNNPIQVPVGTKTLGRIMNVLGEPIDEQGAIGEEERWAIHRSAPSYEEQSNSTELLETGIKVIDLICPFAKGGKVGLFGGAGVGKTVNMMELIRNIAIEHSGYSVFAGVGERTREGNDFYHEMKDSNVLDKVSLVYGQMNEPPGNRLRVALTGLTMAEKFRDEGRDVLFFVDNIYRYTLAGTEVSALLGRMPSAVGYQPTLAEEMGVLQERITSTKTGSITSVQAVYVPADDLTDPSPATTFAHLDSTVVLSRQIASLGIYPAVDPLDSTSRQLDPLVVGQEHYDVARGVQGILQRYKELKDIIAILGMDELSEEDKLVVARARKIERFLSQPFFVAEVFTGSPGKYVTLKDTIRGFKGILEGEYDHIPEQAFYMVGSIDEVLEKAKNM.

Residue 147–154 (GGAGVGKT) coordinates ATP.

This sequence belongs to the ATPase alpha/beta chains family. In terms of assembly, F-type ATPases have 2 components, CF(1) - the catalytic core - and CF(0) - the membrane proton channel. CF(1) has five subunits: alpha(3), beta(3), gamma(1), delta(1), epsilon(1). CF(0) has three main subunits: a(1), b(2) and c(9-12). The alpha and beta chains form an alternating ring which encloses part of the gamma chain. CF(1) is attached to CF(0) by a central stalk formed by the gamma and epsilon chains, while a peripheral stalk is formed by the delta and b chains.

The protein localises to the cell inner membrane. It carries out the reaction ATP + H2O + 4 H(+)(in) = ADP + phosphate + 5 H(+)(out). Functionally, produces ATP from ADP in the presence of a proton gradient across the membrane. The catalytic sites are hosted primarily by the beta subunits. This chain is ATP synthase subunit beta, found in Haemophilus influenzae (strain PittEE).